Reading from the N-terminus, the 868-residue chain is Leucine--tRNA ligase (868 aa).

Positions 42 to 52 (PYPSGKLHMGH) match the 'HIGH' region motif. Residues 627–631 (KMSKS) carry the 'KMSKS' region motif. Lysine 630 is a binding site for ATP.

The protein belongs to the class-I aminoacyl-tRNA synthetase family.

Its subcellular location is the cytoplasm. It carries out the reaction tRNA(Leu) + L-leucine + ATP = L-leucyl-tRNA(Leu) + AMP + diphosphate. The polypeptide is Leucine--tRNA ligase (Pseudomonas putida (strain ATCC 47054 / DSM 6125 / CFBP 8728 / NCIMB 11950 / KT2440)).